Reading from the N-terminus, the 269-residue chain is 4-hydroxy-tetrahydrodipicolinate reductase (269 aa).

Residues 9-14 (GCAGKM), Asp35, 102-104 (GTT), and 128-131 (APNF) contribute to the NAD(+) site. The active-site Proton donor/acceptor is His158. His159 provides a ligand contact to (S)-2,3,4,5-tetrahydrodipicolinate. Residue Lys162 is the Proton donor of the active site. 168-169 (GT) contacts (S)-2,3,4,5-tetrahydrodipicolinate.

The protein belongs to the DapB family.

It is found in the cytoplasm. The catalysed reaction is (S)-2,3,4,5-tetrahydrodipicolinate + NAD(+) + H2O = (2S,4S)-4-hydroxy-2,3,4,5-tetrahydrodipicolinate + NADH + H(+). It carries out the reaction (S)-2,3,4,5-tetrahydrodipicolinate + NADP(+) + H2O = (2S,4S)-4-hydroxy-2,3,4,5-tetrahydrodipicolinate + NADPH + H(+). It functions in the pathway amino-acid biosynthesis; L-lysine biosynthesis via DAP pathway; (S)-tetrahydrodipicolinate from L-aspartate: step 4/4. Its function is as follows. Catalyzes the conversion of 4-hydroxy-tetrahydrodipicolinate (HTPA) to tetrahydrodipicolinate. The chain is 4-hydroxy-tetrahydrodipicolinate reductase from Gloeobacter violaceus (strain ATCC 29082 / PCC 7421).